The following is a 185-amino-acid chain: Ribosome-recycling factor (185 aa).

This sequence belongs to the RRF family.

It is found in the cytoplasm. Functionally, responsible for the release of ribosomes from messenger RNA at the termination of protein biosynthesis. May increase the efficiency of translation by recycling ribosomes from one round of translation to another. This chain is Ribosome-recycling factor, found in Shewanella woodyi (strain ATCC 51908 / MS32).